Here is a 784-residue protein sequence, read N- to C-terminus: Alpha-catulin (784 aa).

The interval 35 to 247 (IKTKSIEQTL…LLLTASKTYL (213 aa)) is vinculin/alpha-catenin homology 1 (VH1) region. The stretch at 387 to 414 (ASGLEVTVERLNRRLKDLSKQLQIVAME) forms a coiled coil. The vinculin/alpha-catenin homology 2 (VH2) region stretch occupies residues 552-696 (PRPGKHGTTQ…MVKSPTVGKT (145 aa)). A disordered region spans residues 737–784 (GSVNGRTGADGERTSRESTVWRRTPSIRRAAPPTSSHLSANNSSSIHI). Residues 745–756 (ADGERTSRESTV) are compositionally biased toward basic and acidic residues. Residues 771–784 (SSHLSANNSSSIHI) are compositionally biased toward low complexity.

The protein belongs to the vinculin/alpha-catenin family. In terms of assembly, interacts with slo-1 (via C-terminus); the interaction is required for localization of slo-1 to dense bodies in body wall muscle cells. Interacts (via N-terminus) with dystrophin complex member dyb-1 (via C-terminus); the interaction is required for localization of the dystrophin complex and ctn-1 near dense bodies in muscle cells. In terms of tissue distribution, expressed in body wall muscles, vulval muscles, stomatointestinal cells and pharyngeal muscle cells. Expressed in enteric muscles, nerve ring neurons and in the ventral nerve cord.

It is found in the cytoplasm. Functionally, required for slo-1 potassium ion channel clustering at presynaptic terminals and in egg-laying muscles; clustering of slo-1 mediates the intoxicating and sedatory effects of ethanol on worms. Required for slo-1 localization to dense bodies in body wall muscle cells. Maintains the localization of the dystrophin complex near muscle cell dense bodies via its interaction with complex member dyb-1 which is required for slo-1 localization in muscle while slo-1 localization in neurons is independent of the dystrophin complex. This is Alpha-catulin from Caenorhabditis elegans.